The chain runs to 387 residues: ATP phosphoribosyltransferase regulatory subunit (387 aa).

The protein belongs to the class-II aminoacyl-tRNA synthetase family. HisZ subfamily. As to quaternary structure, heteromultimer composed of HisG and HisZ subunits.

The protein resides in the cytoplasm. It participates in amino-acid biosynthesis; L-histidine biosynthesis; L-histidine from 5-phospho-alpha-D-ribose 1-diphosphate: step 1/9. Required for the first step of histidine biosynthesis. May allow the feedback regulation of ATP phosphoribosyltransferase activity by histidine. The protein is ATP phosphoribosyltransferase regulatory subunit of Polynucleobacter asymbioticus (strain DSM 18221 / CIP 109841 / QLW-P1DMWA-1) (Polynucleobacter necessarius subsp. asymbioticus).